The chain runs to 150 residues: Truncated transcription factor CAULIFLOWER A (150 aa).

The MADS-box domain occupies 1–61 (MGRGRVEMKR…GKLFEYSSES (61 aa)). The K-box; partial domain maps to 90-150 (QTNWSMEYSR…IRSRKNQLMH (61 aa)).

In terms of assembly, homodimer capable of binding to CArG-box sequences. In terms of tissue distribution, expressed in some of the meristems of arrest-stage cauliflower heads.

Its subcellular location is the nucleus. Its function is as follows. Probable transcription factor that promotes early floral meristem identity in synergy with APETALA1, FRUITFULL and LEAFY. Is required subsequently for the transition of an inflorescence meristem into a floral meristem. Seems to be partially redundant to the function of APETALA1. The protein is Truncated transcription factor CAULIFLOWER A (CAL-A) of Brassica oleracea var. botrytis (Cauliflower).